The primary structure comprises 66 residues: Large ribosomal subunit protein bL35 (66 aa).

Positions 1–16 (MPKQKTHRASAKRFKR) are enriched in basic residues. The segment at 1–21 (MPKQKTHRASAKRFKRTGSGG) is disordered.

It belongs to the bacterial ribosomal protein bL35 family.

The sequence is that of Large ribosomal subunit protein bL35 from Streptococcus mutans serotype c (strain ATCC 700610 / UA159).